We begin with the raw amino-acid sequence, 203 residues long: Ras-related protein Rab-18 (203 aa).

12 residues coordinate GTP: S20, G23, K24, S25, S26, D37, P38, T43, G69, K126, D128, and A155. Positions 40–48 match the Effector region motif; it reads QAATIGVDF. 2 S-geranylgeranyl cysteine lipidation sites follow: C201 and C203. C203 bears the Cysteine methyl ester mark.

The protein belongs to the small GTPase superfamily. Rab family.

The catalysed reaction is GTP + H2O = GDP + phosphate + H(+). The small GTPases Rab are key regulators of intracellular membrane trafficking, from the formation of transport vesicles to their fusion with membranes. Rabs cycle between an inactive GDP-bound form and an active GTP-bound form that is able to recruit to membranes different sets of downstream effectors directly responsible for vesicle formation, movement, tethering and fusion. Plays a role in apical endocytosis/recycling. May be implicated in transport between the plasma membrane and early endosomes. Plays a role in the shedding of pathogen spores from intestinal cells. The chain is Ras-related protein Rab-18 (rab-18) from Caenorhabditis elegans.